The following is a 94-amino-acid chain: MSKNNTSETITRKPMERASKKVFFRRRKGCPLSVPNAPVIDYKNPELLIKFVSEGGRMLPSRITNVCAKKQRKLNNAIKIARILALLPFVFQAK.

It belongs to the bacterial ribosomal protein bS18 family. Part of the 30S ribosomal subunit. Forms a tight heterodimer with protein bS6.

Binds as a heterodimer with protein bS6 to the central domain of the 16S rRNA, where it helps stabilize the platform of the 30S subunit. The chain is Small ribosomal subunit protein bS18 from Rickettsia bellii (strain OSU 85-389).